The following is a 271-amino-acid chain: Phosphatidylglycerol--prolipoprotein diacylglyceryl transferase (271 aa).

Helical transmembrane passes span 17 to 37 (LAIH…FFLA), 63 to 83 (ILFL…CLFY), and 95 to 115 (IFAV…VLVS). Residue Arg-146 coordinates a 1,2-diacyl-sn-glycero-3-phospho-(1'-sn-glycerol). Helical transmembrane passes span 182–202 (SQVY…WLYA), 209–229 (GQVS…AEFF), and 243–263 (MSMG…LWIW).

The protein belongs to the Lgt family.

It is found in the cell inner membrane. It catalyses the reaction L-cysteinyl-[prolipoprotein] + a 1,2-diacyl-sn-glycero-3-phospho-(1'-sn-glycerol) = an S-1,2-diacyl-sn-glyceryl-L-cysteinyl-[prolipoprotein] + sn-glycerol 1-phosphate + H(+). It functions in the pathway protein modification; lipoprotein biosynthesis (diacylglyceryl transfer). Catalyzes the transfer of the diacylglyceryl group from phosphatidylglycerol to the sulfhydryl group of the N-terminal cysteine of a prolipoprotein, the first step in the formation of mature lipoproteins. The chain is Phosphatidylglycerol--prolipoprotein diacylglyceryl transferase from Polaromonas naphthalenivorans (strain CJ2).